Reading from the N-terminus, the 453-residue chain is Secreted aspartic protease 10 (453 aa).

Positions 1 to 20 (MDLVIMNFVFLLYLTSVVKC) are cleaved as a signal peptide. The Peptidase A1 domain occupies 52–372 (YTTELEIGSN…DLQDMTISVA (321 aa)). Asp70 is an active-site residue. Position 70–72 (70–72 (DTG)) interacts with pepstatin A. A disulfide bridge links Cys85 with Cys112. N-linked (GlcNAc...) asparagine glycans are attached at residues Asn115 and Asn128. Pepstatin A is bound at residue 138–139 (VD). Residues Asn168, Asn208, Asn211, and Asn245 are each glycosylated (N-linked (GlcNAc...) asparagine). The active site involves Asp266. A pepstatin A-binding site is contributed by 266–270 (DTGST). An N-linked (GlcNAc...) asparagine glycan is attached at Asn287. A disulfide bond links Cys301 and Cys333. A disordered region spans residues 387 to 432 (NPNEDQNEVPTSTSFTQSASSSGSQPSSTISGENMDKNTTSSSSGN). The segment covering 397–417 (TSTSFTQSASSSGSQPSSTIS) has biased composition (low complexity). Over residues 423-432 (KNTTSSSSGN) the composition is skewed to polar residues. Asn424 carries N-linked (GlcNAc...) asparagine glycosylation. A lipid anchor (GPI-anchor amidated serine) is attached at Ser429. Residues 430–453 (SGNCQTRSWIAILSALFLVYIHII) constitute a propeptide, removed in mature form.

The protein belongs to the peptidase A1 family. The GPI-anchor is attached to the protein in the endoplasmic reticulum and serves to target the protein to the cell surface. There, the glucosamine-inositol phospholipid moiety is cleaved off and the GPI-modified mannoprotein is covalently attached via its lipidless GPI glycan remnant to the 1,6-beta-glucan of the outer cell wall layer.

The protein localises to the secreted. It localises to the cell membrane. It carries out the reaction Preferential cleavage at the carboxyl of hydrophobic amino acids, but fails to cleave 15-Leu-|-Tyr-16, 16-Tyr-|-Leu-17 and 24-Phe-|-Phe-25 of insulin B chain. Activates trypsinogen, and degrades keratin.. Secreted aspartic peptidases (SAPs) are a group of ten acidic hydrolases considered as key virulence factors. These enzymes supply the fungus with nutrient amino acids as well as are able to degrade the selected host's proteins involved in the immune defense. Required for cell surface integrity and cell separation during budding. The polypeptide is Secreted aspartic protease 10 (Candida albicans (strain SC5314 / ATCC MYA-2876) (Yeast)).